We begin with the raw amino-acid sequence, 337 residues long: MASSSGSKAEFIVGGKYKLVRKIGSGSFGDIYLAINITNGEEVAVKLESQKARHPQLLYESKLYKILQGGVGIPHIRWYGQEKDYNVLVMDLLGPSLEDLFNFCSRRFTMKTVLMLADQMISRIEYVHTKNFIHRDIKPDNFLMGIGRHCNKLFLIDFGLAKKYRDNRTRQHIPYREDKNLTGTARYASINAHLGIEQSRRDDMESLGYVLMYFNRTSLPWQGLKAATKKQKYEKISEKKMSTPVEVLCKGFPAEFAMYLNYCRGLRFEEAPDYMYLRQLFRILFRTLNHQYDYTFDWTMLKQKAAQQAASSSGQGQQAQTPTGKQTDKTKSNMKGF.

A2 carries the post-translational modification N-acetylalanine. A Phosphoserine modification is found at S4. The residue at position 8 (K8) is an N6-acetyllysine. Residues 17–285 (YKLVRKIGSG…YLRQLFRILF (269 aa)) form the Protein kinase domain. ATP-binding positions include 23-31 (IGSGSFGDI) and K46. Residue D136 is the Proton acceptor of the active site. Positions 309 to 325 (AASSSGQGQQAQTPTGK) are enriched in low complexity. The tract at residues 309-337 (AASSSGQGQQAQTPTGKQTDKTKSNMKGF) is disordered.

Belongs to the protein kinase superfamily. CK1 Ser/Thr protein kinase family. Casein kinase I subfamily. Interacts with the Axin complex. Interacts with TUT1, leading to TUT1 phosphorylation. Interacts with FAM83A, FAM83B, FAM83C, FAM83D, FAM83E, FAM83F, FAM83G and FAM83H (via DUF1669). Interaction with FAM83H recruits CSNK1A1 to keratin filaments. Post-translationally, phosphorylated by MTOR in response to mitogenic stimulation, leading to its activation.

It localises to the cytoplasm. Its subcellular location is the cytoskeleton. The protein localises to the microtubule organizing center. It is found in the centrosome. The protein resides in the chromosome. It localises to the centromere. Its subcellular location is the kinetochore. The protein localises to the nucleus speckle. It is found in the cilium basal body. The protein resides in the spindle. The enzyme catalyses L-seryl-[protein] + ATP = O-phospho-L-seryl-[protein] + ADP + H(+). The catalysed reaction is L-threonyl-[protein] + ATP = O-phospho-L-threonyl-[protein] + ADP + H(+). In terms of biological role, casein kinases are operationally defined by their preferential utilization of acidic proteins such as caseins as substrates. Can phosphorylate a large number of proteins. Participates in Wnt signaling. Phosphorylates CTNNB1 at 'Ser-45'. May phosphorylate PER1 and PER2. May play a role in segregating chromosomes during mitosis. May play a role in keratin cytoskeleton disassembly and thereby, it may regulate epithelial cell migration. Acts as a positive regulator of mTORC1 and mTORC2 signaling in response to nutrients by mediating phosphorylation of DEPTOR inhibitor. Acts as an inhibitor of NLRP3 inflammasome assembly by mediating phosphorylation of NLRP3. The sequence is that of Casein kinase I isoform alpha (Csnk1a1) from Mus musculus (Mouse).